The chain runs to 498 residues: Zinc finger protein 682 (498 aa).

The 72-residue stretch at 4–75 folds into the KRAB domain; the sequence is LTFRDVTIEF…KRHETIAKPP (72 aa). 10 C2H2-type zinc fingers span residues 173–195, 201–223, 229–251, 257–279, 285–307, 313–335, 341–363, 369–391, 397–419, and 425–447; these read FKCMQCGKVFKSHSGLSYHKIIH, CICEECGKTFKWFSYLTKHKRIH, YKCEECGKAFNWCSSLTKHKRIH, YKCEECGKAFHWCSPFVRHKKIH, YTCEDCGRAFNRHSHLTKHKTIH, YKCKECGKAFNHCSLLTIHERTH, YKCEECGKAFNSSSILTEHKVIH, YKCEKCDKVFKRFSYLTKHKRIH, YKCEECGKAFNWSSILTEHKRIH, and YNCEECGKAFNRCSHLTRHKKIH. The C2H2-type 11; degenerate zinc-finger motif lies at 453-475; the sequence is YKCEECGKAFKRCSHLNEHKRVQ.

The protein belongs to the krueppel C2H2-type zinc-finger protein family.

It localises to the nucleus. May be involved in transcriptional regulation. This chain is Zinc finger protein 682 (ZNF682), found in Homo sapiens (Human).